We begin with the raw amino-acid sequence, 92 residues long: Small ribosomal subunit protein uS19c (92 aa).

The protein belongs to the universal ribosomal protein uS19 family.

The protein resides in the plastid. Its subcellular location is the chloroplast. Functionally, protein S19 forms a complex with S13 that binds strongly to the 16S ribosomal RNA. The polypeptide is Small ribosomal subunit protein uS19c (Phaseolus angularis (Azuki bean)).